Reading from the N-terminus, the 539-residue chain is MSVLNIAVSRCSPTVAFCSLVILCILFKVLTRVREDRKIRSLGKYGHQIQSKLPLGIGFLYSMVKAVRAQKNFEFWRDNIFGASGRWTVETRIMNERTIFTADPGNIKAMLATQFSDYGKGAAFHAMWKDFLGNSIFATDGERWSASRKLIRPQFTRDRLSDLQCFEAHMQTLFRVLDAGGSPLDSKHAEETPMSQGKAIDIRDLLYRFTFDVSTDFLLGQDVQSLTTPRQEFAHAFDEVQRMQTIFVRSRHFSKFMSKKSFRDSLKVMNGFIHKHVRRALSLSPQETQQKSQSGSKYTFLEAIAGFTRDPTMLRDQIVGVLLAGRDTTAATLSWALYELSRHPEAVDALRREILQTVGSDAPTYDQLKNMPYLKAVLNETLRIYPAVPYNVRIALEDTTLPHGGGPDGSEPIAVLKNTKIAYSTLILHRRRDLYPATSEKFADPAIFSPDRWLHWHPSAHDYIPFSAGPRLCTGQQFALMEMSYVLCRLFQRFERVESHMQHIDGGNPTLKADIILSPGDGVWVSFHEPKQIDSNQLL.

Residues 15 to 31 (VAFCSLVILCILFKVLT) traverse the membrane as a helical segment. Asn-379 carries an N-linked (GlcNAc...) asparagine glycan. Cys-473 provides a ligand contact to heme.

The protein belongs to the cytochrome P450 family. It depends on heme as a cofactor.

The protein localises to the membrane. It participates in secondary metabolite biosynthesis. Cytochrome P450 monooxygenase; part of the gene cluster that mediates the biosynthesis of varicidin A, an antifungal natural product containing a cis-octahydrodecalin core. The PKS module of pvhA together with the enoylreductase pvhC catalyze the formation of the polyketide unit which is then conjugated to L-isoleucine by the condensation domain of the NRPS module. Activity of the Dieckmann cyclase domain (RED) of pvhA results in release of an acyclic tetramate. The cytochrome P450 monooxygenase pvhE then catalyzes the oxidation of the C21 methyl group to a to carboxylate group. The methyltransferase pvhD then further methylates the pvhE product. The Diels-Alderase pvhB is able to catalyze Diels-Alder cycloaddition using both pvhE and pvhD products as substrates to form the decalin ring, yielding varicidin B and A, respectively. The chain is Cytochrome P450 monooxygenase pvhE from Talaromyces variabilis (Penicillium variabile).